A 206-amino-acid polypeptide reads, in one-letter code: Protein GrpE (206 aa).

The protein belongs to the GrpE family. In terms of assembly, homodimer.

The protein localises to the cytoplasm. Functionally, participates actively in the response to hyperosmotic and heat shock by preventing the aggregation of stress-denatured proteins, in association with DnaK and GrpE. It is the nucleotide exchange factor for DnaK and may function as a thermosensor. Unfolded proteins bind initially to DnaJ; upon interaction with the DnaJ-bound protein, DnaK hydrolyzes its bound ATP, resulting in the formation of a stable complex. GrpE releases ADP from DnaK; ATP binding to DnaK triggers the release of the substrate protein, thus completing the reaction cycle. Several rounds of ATP-dependent interactions between DnaJ, DnaK and GrpE are required for fully efficient folding. This is Protein GrpE from Psychromonas ingrahamii (strain DSM 17664 / CCUG 51855 / 37).